Reading from the N-terminus, the 461-residue chain is Protein FAM124B (461 aa).

Serine 49 is modified (phosphoserine). Residues 302-346 (VELPEPGGRPVSDGSSNTWWKSAGGSAQPSSPATESQPQLSSLHL) form a disordered region. Positions 323–334 (SAGGSAQPSSPA) are enriched in low complexity.

It belongs to the FAM124 family. Interacts with CHD7 and CHD8.

It localises to the nucleus. In Bos taurus (Bovine), this protein is Protein FAM124B (FAM124B).